The primary structure comprises 115 residues: MTRVKRGYVARKHRKNILKFTSGFQGAHSKLFRTANQQKMKALAYAQRDRNNRKRDIRRLWITRINAACRNNGIVYNGIIHSMSEKKVHLNRKILAQIAILDSNSFFGIVKEIGM.

This sequence belongs to the bacterial ribosomal protein bL20 family.

It is found in the plastid. The protein localises to the chloroplast. Functionally, binds directly to 23S ribosomal RNA and is necessary for the in vitro assembly process of the 50S ribosomal subunit. It is not involved in the protein synthesizing functions of that subunit. In Angiopteris evecta (Mule's foot fern), this protein is Large ribosomal subunit protein bL20c.